An 879-amino-acid polypeptide reads, in one-letter code: Beta-mannosidase (879 aa).

Positions 1–19 (MHLHLLLILALFRAGCVVA) are cleaved as a signal peptide. Residues N35, N77, N89, and N113 are each glycosylated (N-linked (GlcNAc...) asparagine). A disulfide bond links C167 and C176. 190–192 (WDW) provides a ligand contact to substrate. 3 N-linked (GlcNAc...) asparagine glycosylation sites follow: N226, N297, and N302. Position 456 (N456) interacts with substrate. E457 functions as the Proton donor in the catalytic mechanism. Intrachain disulfides connect C540–C629, C732–C761, and C764–C769. The active-site Nucleophile is E554. N-linked (GlcNAc...) asparagine glycosylation occurs at N736. N803 and N807 each carry an N-linked (GlcNAc...) asparagine glycan.

Belongs to the glycosyl hydrolase 2 family. As to quaternary structure, monomer. Highest level in liver, high levels in lung, testis, skin and spleen, moderate level in thymus. Activity found in plasma, kidney, liver, spleen, pancreas, brain, testis, epididymis, heart, lung and skeletal muscle.

The protein resides in the lysosome. The enzyme catalyses Hydrolysis of terminal, non-reducing beta-D-mannose residues in beta-D-mannosides.. The protein operates within glycan metabolism; N-glycan degradation. Its function is as follows. Exoglycosidase that cleaves the single beta-linked mannose residue from the non-reducing end of all N-linked glycoprotein oligosaccharides. The polypeptide is Beta-mannosidase (Mus musculus (Mouse)).